The following is a 781-amino-acid chain: Cadherin-24 (781 aa).

An N-terminal signal peptide occupies residues 1 to 22; it reads MWGLVRLLLAWLGGWGCMGRLA. The propeptide occupies 23 to 44; sequence APVPAWAGSRGHSGPTLLRTRR. At 45-603 the chain is on the extracellular side; that stretch reads SWVWNQFFVI…LSPTGLSTGA (559 aa). 5 Cadherin domains span residues 46–150, 151–259, 260–374, 375–479, and 479–592; these read WVWN…PPVF, PLGP…PPKF, PQSL…PPAF, TQAT…APQL, and LAEP…WPEA. 3 N-linked (GlcNAc...) asparagine glycosylation sites follow: Asn-446, Asn-510, and Asn-525. Residues 604–624 form a helical membrane-spanning segment; that stretch reads LLAIVTCMGTLLALVVLFVAL. Residues 625–781 are Cytoplasmic-facing; it reads RRQKQEALMV…LYGAKEPPAP (157 aa). Disordered regions lie at residues 665 to 700 and 731 to 762; these read LQNP…PGPA and EGRG…LDDW. Positions 733 to 746 are enriched in low complexity; sequence RGSSCGSLSSLGSG.

In terms of assembly, associates with alpha-, beta- and delta-catenins.

The protein localises to the cell membrane. Cadherins are calcium-dependent cell adhesion proteins. They preferentially interact with themselves in a homophilic manner in connecting cells; cadherins may thus contribute to the sorting of heterogeneous cell types. Cadherin-24 mediate strong cell-cell adhesion. This is Cadherin-24 (Cdh24) from Mus musculus (Mouse).